The following is a 1207-amino-acid chain: Plasma membrane calcium-transporting ATPase 4 (1207 aa).

The Cytoplasmic portion of the chain corresponds to methionine 1 to alanine 100. At serine 13 the chain carries Phosphoserine. The helical transmembrane segment at leucine 101–phenylalanine 121 threads the bilayer. The Extracellular portion of the chain corresponds to tyrosine 122–alanine 147. The chain crosses the membrane as a helical span at residues glycine 148–phenylalanine 168. Residues asparagine 169–leucine 368 lie on the Cytoplasmic side of the membrane. Residues glutamate 294 to aspartate 317 are disordered. A phosphoserine mark is found at serine 328 and serine 334. The chain crosses the membrane as a helical span at residues isoleucine 369 to isoleucine 389. Over glutamine 390–lysine 408 the chain is Extracellular. A helical transmembrane segment spans residues phenylalanine 409–valine 429. Topologically, residues threonine 430–phenylalanine 843 are cytoplasmic. The active-site 4-aspartylphosphate intermediate is the aspartate 465. Mg(2+) is bound by residues aspartate 785 and aspartate 789. Residues leucine 844–isoleucine 864 traverse the membrane as a helical segment. Residues threonine 865–lysine 871 lie on the Extracellular side of the membrane. Residues alanine 872 to threonine 892 traverse the membrane as a helical segment. Residues glutamate 893–lysine 918 lie on the Cytoplasmic side of the membrane. Residues asparagine 919–glutamate 939 form a helical membrane-spanning segment. Residues lysine 940–serine 957 lie on the Extracellular side of the membrane. A helical transmembrane segment spans residues glutamine 958 to asparagine 977. Over serine 978–asparagine 994 the chain is Cytoplasmic. The helical transmembrane segment at leucine 995–glycine 1015 threads the bilayer. Residues glycine 1016–glutamine 1028 lie on the Extracellular side of the membrane. Residues tryptophan 1029–isoleucine 1049 form a helical membrane-spanning segment. The Cytoplasmic segment spans residues proline 1050–valine 1207. Positions leucine 1086–glutamine 1103 are calmodulin-binding subdomain A. Threonine 1102 is modified (phosphothreonine; by PKC). The tract at residues isoleucine 1104 to serine 1113 is calmodulin-binding subdomain B. The interval valine 1159–asparagine 1181 is disordered. The span at glycine 1163 to asparagine 1181 shows a compositional bias: polar residues.

This sequence belongs to the cation transport ATPase (P-type) (TC 3.A.3) family. Type IIB subfamily. As to quaternary structure, interacts with PDZD11. Interacts with SLC35G1 and STIM1. Interacts with calmodulin. Isoform 1 is detected in brain, heart, liver, testis and epididymis. Isoform 2 is detected in brain (at protein level), heart, seminal vesicle and epididymis. There is a shift in expression from isoform 1 to isoform 2 along the length of the epididymis from caput to cauda (at protein level).

The protein resides in the cell membrane. The protein localises to the cell projection. It is found in the cilium. Its subcellular location is the flagellum membrane. The enzyme catalyses Ca(2+)(in) + ATP + H2O = Ca(2+)(out) + ADP + phosphate + H(+). Its activity is regulated as follows. Activated by calcium/calmodulin. Its function is as follows. Calcium/calmodulin-regulated and magnesium-dependent enzyme that catalyzes the hydrolysis of ATP coupled with the transport of calcium out of the cell. By regulating sperm cells calcium homeostasis, may play a role in sperm motility. This chain is Plasma membrane calcium-transporting ATPase 4, found in Bos taurus (Bovine).